Here is a 270-residue protein sequence, read N- to C-terminus: Regulatory protein RecX (270 aa).

Belongs to the RecX family.

Its subcellular location is the cytoplasm. Its function is as follows. Modulates RecA activity. The polypeptide is Regulatory protein RecX (Bacillus mycoides (strain KBAB4) (Bacillus weihenstephanensis)).